A 642-amino-acid polypeptide reads, in one-letter code: Chaperone protein DnaK (642 aa).

Thr198 bears the Phosphothreonine; by autocatalysis mark. The segment at 602–642 is disordered; it reads EAAGGAEAEAAAGGHGGASGSHDDKVVDADFEEVDGDKKGK. Residues 603-613 show a composition bias toward low complexity; it reads AAGGAEAEAAA.

The protein belongs to the heat shock protein 70 family.

Functionally, acts as a chaperone. This is Chaperone protein DnaK from Paramagnetospirillum magneticum (strain ATCC 700264 / AMB-1) (Magnetospirillum magneticum).